The following is a 212-amino-acid chain: 3-isopropylmalate dehydratase small subunit (212 aa).

The protein belongs to the LeuD family. LeuD type 1 subfamily. In terms of assembly, heterodimer of LeuC and LeuD.

It carries out the reaction (2R,3S)-3-isopropylmalate = (2S)-2-isopropylmalate. It functions in the pathway amino-acid biosynthesis; L-leucine biosynthesis; L-leucine from 3-methyl-2-oxobutanoate: step 2/4. Its function is as follows. Catalyzes the isomerization between 2-isopropylmalate and 3-isopropylmalate, via the formation of 2-isopropylmaleate. The protein is 3-isopropylmalate dehydratase small subunit of Pseudomonas aeruginosa (strain LESB58).